The following is a 105-amino-acid chain: Ribosomal silencing factor RsfS (105 aa).

Belongs to the Iojap/RsfS family. Interacts with ribosomal protein uL14 (rplN).

It is found in the cytoplasm. Its function is as follows. Functions as a ribosomal silencing factor. Interacts with ribosomal protein uL14 (rplN), blocking formation of intersubunit bridge B8. Prevents association of the 30S and 50S ribosomal subunits and the formation of functional ribosomes, thus repressing translation. The polypeptide is Ribosomal silencing factor RsfS (Escherichia coli O6:H1 (strain CFT073 / ATCC 700928 / UPEC)).